A 167-amino-acid polypeptide reads, in one-letter code: Large ribosomal subunit protein uL23 (167 aa).

Residues 1–130 (MNVNEIIKGP…ELEAKNKEIA (130 aa)) are large ribosomal subunit protein uL23. Disordered stretches follow at residues 91–112 (FEDESPQDQKDSETISENTDEK) and 137–167 (QAELAKKESETNENQEKKIENQTENQENSAK). Basic and acidic residues-rich tracts occupy residues 97–112 (QDQKDSETISENTDEK) and 137–157 (QAELAKKESETNENQEKKIEN). Positions 131–167 (EKLAKKQAELAKKESETNENQEKKIENQTENQENSAK) are unknown. Polar residues predominate over residues 158 to 167 (QTENQENSAK).

It belongs to the universal ribosomal protein uL23 family. Part of the 50S ribosomal subunit. Contacts protein L29, and trigger factor when it is bound to the ribosome.

One of the early assembly proteins it binds 23S rRNA. One of the proteins that surrounds the polypeptide exit tunnel on the outside of the ribosome. Forms the main docking site for trigger factor binding to the ribosome. In Mesomycoplasma hyopneumoniae (strain 7448) (Mycoplasma hyopneumoniae), this protein is Large ribosomal subunit protein uL23.